A 389-amino-acid chain; its full sequence is Aromatic-amino-acid aminotransferase 2 (389 aa).

Lys-233 is subject to N6-(pyridoxal phosphate)lysine.

This sequence belongs to the class-I pyridoxal-phosphate-dependent aminotransferase family. Homodimer. Pyridoxal 5'-phosphate serves as cofactor.

It catalyses the reaction an aromatic L-alpha-amino acid + 2-oxoglutarate = an aromatic oxo-acid + L-glutamate. In terms of biological role, catalyzes the transamination of phenylalanine, tyrosine and tryptophan. Shows virtually no activity towards aspartic acid, alanine, valine or isoleucine. This is Aromatic-amino-acid aminotransferase 2 from Thermococcus litoralis (strain ATCC 51850 / DSM 5473 / JCM 8560 / NS-C).